Consider the following 411-residue polypeptide: NADH-quinone oxidoreductase subunit D 2 (411 aa).

It belongs to the complex I 49 kDa subunit family. As to quaternary structure, NDH-1 is composed of 14 different subunits. Subunits NuoB, C, D, E, F, and G constitute the peripheral sector of the complex.

The protein resides in the cell membrane. The enzyme catalyses a quinone + NADH + 5 H(+)(in) = a quinol + NAD(+) + 4 H(+)(out). NDH-1 shuttles electrons from NADH, via FMN and iron-sulfur (Fe-S) centers, to quinones in the respiratory chain. The immediate electron acceptor for the enzyme in this species is believed to be ubiquinone. Couples the redox reaction to proton translocation (for every two electrons transferred, four hydrogen ions are translocated across the cytoplasmic membrane), and thus conserves the redox energy in a proton gradient. This is NADH-quinone oxidoreductase subunit D 2 from Chloroflexus aurantiacus (strain ATCC 29366 / DSM 635 / J-10-fl).